We begin with the raw amino-acid sequence, 593 residues long: MSAKERGDQNAVVDALRSIQPAVFIPASVVIVAMIVVSVVYSSVAENAFVRLNSAITGGVGWWYILVATGFVVFALYCGISRIGTIRLGRDDELPEFSFWAWLAMLFSAGMGIGLVFYGVAEPLSHYLRPPRSRGVPALTDAAANQAMALTVFHWGLHAWAIYVVVGLGMAYMTYRRGRPLSVRWLLEPVVGRGRVEGALGHAVDVIAIVGTLFGVATSLGFGITQIASGLEYLGWIRVDNWWMVGMIAAITATATASVVSGVSKGLKWLSNINMALAAALALFVLLLGPTLFLLQSWVQNLGGYVQSLPQFMLRTAPFSHDGWLGDWTIFYWGWWISWAPFVGMFIARISRGRTIREFIGAVLLVPTVIASLWFTIFGDSALLRQRNNGDMLVNGAVDTNTSLFRLLDGLPIGAITSVLAVLVIVFFFVTSSDSGSLVIDILSAGGELDPPKLTRVYWAVLEGVAAAVLLLIGGAGSLTALRTAAIATALPFSIVMVVACYAMTKAFHFDLAATPRLLHVTVPDVVAAGNRRRHDISATLSGLIAVRDVDSGTYIVHPDTGALTVTAPPDPLDDHVFESDRHVTRRNTTSSR.

12 consecutive transmembrane segments (helical) span residues 21–41 (PAVFIPASVVIVAMIVVSVVY), 60–80 (VGWWYILVATGFVVFALYCGI), 97–117 (FSFWAWLAMLFSAGMGIGLVF), 148–168 (MALTVFHWGLHAWAIYVVVGL), 204–224 (VDVIAIVGTLFGVATSLGFGI), 243–263 (WMVGMIAAITATATASVVSGV), 275–295 (MALAAALALFVLLLGPTLFLL), 328–348 (WTIFYWGWWISWAPFVGMFIA), 359–379 (FIGAVLLVPTVIASLWFTIFG), 410–430 (GLPIGAITSVLAVLVIVFFFV), 457–477 (VYWAVLEGVAAAVLLLIGGAG), and 485–505 (AAIATALPFSIVMVVACYAMT).

The protein belongs to the BCCT transporter (TC 2.A.15) family.

The protein resides in the cell membrane. This is an uncharacterized protein from Mycobacterium tuberculosis (strain CDC 1551 / Oshkosh).